A 112-amino-acid chain; its full sequence is Peptidyl-prolyl cis-trans isomerase FKBP12 (112 aa).

Positions 1 to 26 (MGVEKQVIRPGNGPKPAPGQTVTVHC) are disordered. One can recognise a PPIase FKBP-type domain in the interval 19–112 (GQTVTVHCTG…DFEIEVLSVQ (94 aa)). C26 and C80 are joined by a disulfide.

This sequence belongs to the FKBP-type PPIase family. Interacts with FIP37 and with the immunosuppressive drug FK506. Its interaction with FIP37 is inhibited by FK506. Interacts with TOR in a rapamycin-dependent manner.

The protein localises to the cytoplasm. It catalyses the reaction [protein]-peptidylproline (omega=180) = [protein]-peptidylproline (omega=0). In terms of biological role, PPIases accelerate the folding of proteins. It catalyzes the cis-trans isomerization of proline imidic peptide bonds in oligopeptides. Mediates rapamycin inactivation of TOR protein kinase activity. The protein is Peptidyl-prolyl cis-trans isomerase FKBP12 (FKBP12) of Arabidopsis thaliana (Mouse-ear cress).